The primary structure comprises 610 residues: DNA mismatch repair protein MutL (610 aa).

The disordered stretch occupies residues 351 to 406 (GQRPQAPWSAETSPSRPYQPAPAFSERPQASFDGLSTPTARAEPQFSPDPVSPGLA).

It belongs to the DNA mismatch repair MutL/HexB family.

Functionally, this protein is involved in the repair of mismatches in DNA. It is required for dam-dependent methyl-directed DNA mismatch repair. May act as a 'molecular matchmaker', a protein that promotes the formation of a stable complex between two or more DNA-binding proteins in an ATP-dependent manner without itself being part of a final effector complex. The sequence is that of DNA mismatch repair protein MutL from Rhizobium etli (strain ATCC 51251 / DSM 11541 / JCM 21823 / NBRC 15573 / CFN 42).